A 453-amino-acid chain; its full sequence is Collagen alpha-4(IV) chain (453 aa).

A disordered region spans residues 1–218 (GPPGPPGAPG…PPGPMGDPGP (218 aa)). A triple-helical region region spans residues 1–222 (GPPGPPGAPG…MGDPGPIGFG (222 aa)). 3 stretches are compositionally biased toward pro residues: residues 26–44 (QGPP…PGPP), 60–72 (PGPP…PGPP), and 95–122 (PQGP…PLGP). The span at 153–162 (PEGTMGLPGM) shows a compositional bias: low complexity. Over residues 174-183 (PGLDGRRGED) the composition is skewed to basic and acidic residues. Positions 206 to 215 (APGPPGPMGD) are enriched in pro residues. The 226-residue stretch at 228 to 453 (GFLLVLHSQT…SRCQVCVKHS (226 aa)) folds into the Collagen IV NC1 domain. Cystine bridges form between cysteine 243–cysteine 332, cysteine 276–cysteine 329, cysteine 288–cysteine 294, cysteine 351–cysteine 449, cysteine 385–cysteine 446, and cysteine 397–cysteine 404.

The protein belongs to the type IV collagen family. In terms of assembly, there are six type IV collagen isoforms, alpha 1(IV)-alpha 6(IV), each of which can form a triple helix structure with 2 other chains to generate type IV collagen network. The alpha 3(IV) chain forms a triple helical protomer with alpha 4(IV) and alpha 5(IV); this triple helical structure dimerizes through NC1-NC1 domain interactions such that the alpha 3(IV), alpha 4(IV) and alpha 5(IV) chains of one protomer connect with the alpha 5(IV), alpha 4(IV) and alpha 3(IV) chains of the opposite protomer, respectively. Associates with LAMB2 at the neuromuscular junction and in GBM. Prolines at the third position of the tripeptide repeating unit (G-X-Y) are hydroxylated in some or all of the chains. In terms of processing, type IV collagens contain numerous cysteine residues which are involved in inter- and intramolecular disulfide bonding. 12 of these, located in the NC1 domain, are conserved in all known type IV collagens. Post-translationally, the trimeric structure of the NC1 domains is stabilized by covalent bonds between Lys and Met residues. In terms of tissue distribution, alpha 3 and alpha 4 type IV collagens are colocalized and present only in basement membranes of kidney, eye, cochlea, lung and brain.

The protein resides in the secreted. The protein localises to the extracellular space. It is found in the extracellular matrix. Its subcellular location is the basement membrane. In terms of biological role, type IV collagen is the major structural component of glomerular basement membranes (GBM), forming a 'chicken-wire' meshwork together with laminins, proteoglycans and entactin/nidogen. The polypeptide is Collagen alpha-4(IV) chain (COL4A4) (Bos taurus (Bovine)).